Here is a 500-residue protein sequence, read N- to C-terminus: Probable cytosol aminopeptidase (500 aa).

Mn(2+) contacts are provided by Lys-265 and Asp-270. Lys-277 is an active-site residue. Asp-288, Asp-347, and Glu-349 together coordinate Mn(2+). Arg-351 is a catalytic residue.

This sequence belongs to the peptidase M17 family. Mn(2+) is required as a cofactor.

The protein localises to the cytoplasm. The catalysed reaction is Release of an N-terminal amino acid, Xaa-|-Yaa-, in which Xaa is preferably Leu, but may be other amino acids including Pro although not Arg or Lys, and Yaa may be Pro. Amino acid amides and methyl esters are also readily hydrolyzed, but rates on arylamides are exceedingly low.. It carries out the reaction Release of an N-terminal amino acid, preferentially leucine, but not glutamic or aspartic acids.. Functionally, presumably involved in the processing and regular turnover of intracellular proteins. Catalyzes the removal of unsubstituted N-terminal amino acids from various peptides. This chain is Probable cytosol aminopeptidase, found in Rickettsia peacockii (strain Rustic).